The sequence spans 197 residues: Imidazoleglycerol-phosphate dehydratase (197 aa).

This sequence belongs to the imidazoleglycerol-phosphate dehydratase family.

The protein localises to the cytoplasm. It carries out the reaction D-erythro-1-(imidazol-4-yl)glycerol 3-phosphate = 3-(imidazol-4-yl)-2-oxopropyl phosphate + H2O. It functions in the pathway amino-acid biosynthesis; L-histidine biosynthesis; L-histidine from 5-phospho-alpha-D-ribose 1-diphosphate: step 6/9. The chain is Imidazoleglycerol-phosphate dehydratase from Pseudomonas syringae pv. syringae (strain B728a).